The chain runs to 674 residues: Protein asunder (674 aa).

Residues 516–538 are a coiled coil; that stretch reads HKAKDQYRLLYRELEQLIQLNAS. Residues 601-607 carry the Nuclear localization signal (NLS) motif; sequence LKASKRR.

The protein belongs to the Integrator subunit 13 family. In terms of assembly, belongs to the multiprotein complex Integrator, at least composed of IntS1, IntS2, IntS3, IntS4, omd/IntS5, IntS6, defl/IntS7, IntS8, IntS9, IntS10, IntS11, IntS12, asun/IntS13, IntS14 and IntS15. The core complex associates with protein phosphatase 2A subunits mts/PP2A and Pp2A-29B, to form the Integrator-PP2A (INTAC) complex. Phosphorylated.

The protein localises to the nucleus. The protein resides in the cytoplasm. It is found in the perinuclear region. Functionally, component of the integrator complex, a multiprotein complex that terminates RNA polymerase II (Pol II) transcription in the promoter-proximal region of genes. The integrator complex provides a quality checkpoint during transcription elongation by driving premature transcription termination of transcripts that are unfavorably configured for transcriptional elongation: the complex terminates transcription by (1) catalyzing dephosphorylation of the C-terminal domain (CTD) of Pol II subunit Polr2A/Rbp1 and Spt5, and (2) degrading the exiting nascent RNA transcript via endonuclease activity. The integrator complex is also involved in the 3'-end processing of the U7 snRNA, and also the spliceosomal snRNAs U1, U2, U4 and U5. This is Protein asunder (asun) from Drosophila persimilis (Fruit fly).